The following is a 553-amino-acid chain: Glucagon-like peptide 2 receptor (553 aa).

Over 1 to 173 the chain is Extracellular; it reads MKLGSSRAGP…SFKQNVDRYA (173 aa). Intrachain disulfides connect Cys-83–Cys-105, Cys-96–Cys-137, and Cys-118–Cys-159. Residues Asn-97, Asn-113, Asn-148, and Asn-162 are each glycosylated (N-linked (GlcNAc...) asparagine). The chain crosses the membrane as a helical span at residues 174–198; it reads LLSTLQLMYTVGYSFSLISLFLALT. The Cytoplasmic portion of the chain corresponds to 199–210; sequence LLLFLRKLHCTR. The chain crosses the membrane as a helical span at residues 211–235; sequence NYIHMNLFASFILRTLAVLVKDVVF. Residues 236 to 261 lie on the Extracellular side of the membrane; the sequence is YNSYSKRPDNENGWMSYLSEMSTSCR. The chain crosses the membrane as a helical span at residues 262-285; the sequence is SVQVLLHYFVGANYLWLLVEGLYL. Topologically, residues 286-299 are cytoplasmic; it reads HTLLEPTVLPERRL. The chain crosses the membrane as a helical span at residues 300 to 321; sequence WPRYLLLGWAFPVLFVVPWGFA. The Extracellular segment spans residues 322–339; the sequence is RAHLENTGCWTTNGNKKI. Residues 340–362 form a helical membrane-spanning segment; it reads WWIIRGPMMLCVTVNFFIFLKIL. The Cytoplasmic segment spans residues 363 to 386; it reads KLLISKLKAHQMCFRDYKYRLAKS. The helical transmembrane segment at 387-405 threads the bilayer; the sequence is TLVLIPLLGVHEILFSFIT. Over 406 to 417 the chain is Extracellular; sequence DDQVEGFAKLIR. Residues 418 to 438 form a helical membrane-spanning segment; that stretch reads LFIQLTLSSFHGFLVALQYGF. Residues 439-550 lie on the Cytoplasmic side of the membrane; the sequence is ANGEVKAELR…ANTMEEILEE (112 aa).

This sequence belongs to the G-protein coupled receptor 2 family.

The protein resides in the cell membrane. Its function is as follows. This is a receptor for glucagon-like peptide 2. The activity of this receptor is mediated by G proteins which activate adenylyl cyclase. The sequence is that of Glucagon-like peptide 2 receptor (GLP2R) from Homo sapiens (Human).